Consider the following 111-residue polypeptide: uncharacterized protein (111 aa).

The protein belongs to the asfivirus E111R family.

This is an uncharacterized protein from Ornithodoros (relapsing fever ticks).